The following is a 232-amino-acid chain: Ureidoacrylate amidohydrolase RutB (232 aa).

D26 serves as the catalytic Proton acceptor. K135 is an active-site residue. C168 acts as the Nucleophile in catalysis.

The protein belongs to the isochorismatase family. RutB subfamily.

It catalyses the reaction (Z)-3-ureidoacrylate + H2O + H(+) = (Z)-3-aminoacrylate + NH4(+) + CO2. It carries out the reaction (Z)-3-ureidoacrylate + H2O = (Z)-3-aminoacrylate + carbamate + H(+). The enzyme catalyses (Z)-2-methylureidoacrylate + H2O + H(+) = (Z)-2-methylaminoacrylate + NH4(+) + CO2. Functionally, hydrolyzes ureidoacrylate to form aminoacrylate and carbamate. The carbamate hydrolyzes spontaneously, thereby releasing one of the nitrogen atoms of the pyrimidine ring as ammonia and one of its carbon atoms as CO2. The protein is Ureidoacrylate amidohydrolase RutB of Cronobacter turicensis (strain DSM 18703 / CCUG 55852 / LMG 23827 / z3032).